The following is an 890-amino-acid chain: Kinesin-like protein KIN-7C, mitochondrial (890 aa).

The segment covering 1–13 has biased composition (polar residues); sequence MSATRSQRSSTIS. The disordered stretch occupies residues 1–66; the sequence is MSATRSQRSS…TSSAAASSTA (66 aa). The N-terminal 73 residues, 1 to 73, are a transit peptide targeting the mitochondrion; that stretch reads MSATRSQRSS…STAVASTKLK (73 aa). The span at 40-66 shows a compositional bias: low complexity; the sequence is SPVTSSSPLLRSSPSPSTSSAAASSTA. The 320-residue stretch at 75–394 folds into the Kinesin motor domain; sequence NITVTIRFRP…LKFAQRCKHV (320 aa). 155–162 is an ATP binding site; sequence GVTSSGKT. A coiled-coil region spans residues 395–468; sequence EIKASRNKIM…MGRIQRLTKL (74 aa). A disordered region spans residues 511 to 595; it reads DGAVSTVSEH…TTRRENAAAI (85 aa). Residues 569-579 show a composition bias toward low complexity; sequence SQASGSPSSSS. 2 coiled-coil regions span residues 664-693 and 729-765; these read HIRD…IIEI and ADNR…LAER. The tract at residues 768-797 is disordered; the sequence is TQQIAGDESSGKNIHNRNGEESEIYSGAGT. The stretch at 818 to 884 forms a coiled coil; the sequence is NETALNSQAL…AEEVTRLCNE (67 aa).

The protein belongs to the TRAFAC class myosin-kinesin ATPase superfamily. Kinesin family. KIN-7 subfamily.

The protein resides in the mitochondrion. This is Kinesin-like protein KIN-7C, mitochondrial from Arabidopsis thaliana (Mouse-ear cress).